The sequence spans 444 residues: Phosphoglucosamine mutase (444 aa).

The active-site Phosphoserine intermediate is serine 102. The Mg(2+) site is built by serine 102, aspartate 241, aspartate 243, and aspartate 245. Serine 102 carries the post-translational modification Phosphoserine.

It belongs to the phosphohexose mutase family. Requires Mg(2+) as cofactor. In terms of processing, activated by phosphorylation.

It catalyses the reaction alpha-D-glucosamine 1-phosphate = D-glucosamine 6-phosphate. Catalyzes the conversion of glucosamine-6-phosphate to glucosamine-1-phosphate. This chain is Phosphoglucosamine mutase, found in Leptothrix cholodnii (strain ATCC 51168 / LMG 8142 / SP-6) (Leptothrix discophora (strain SP-6)).